Consider the following 604-residue polypeptide: Elongation factor 4 1 (604 aa).

In terms of domain architecture, tr-type G spans 10-191 (EHIRNFCIIA…AIVDSVPAPT (182 aa)). GTP is bound by residues 22–27 (DHGKST) and 138–141 (NKID).

Belongs to the TRAFAC class translation factor GTPase superfamily. Classic translation factor GTPase family. LepA subfamily.

The protein localises to the cell inner membrane. It carries out the reaction GTP + H2O = GDP + phosphate + H(+). Its function is as follows. Required for accurate and efficient protein synthesis under certain stress conditions. May act as a fidelity factor of the translation reaction, by catalyzing a one-codon backward translocation of tRNAs on improperly translocated ribosomes. Back-translocation proceeds from a post-translocation (POST) complex to a pre-translocation (PRE) complex, thus giving elongation factor G a second chance to translocate the tRNAs correctly. Binds to ribosomes in a GTP-dependent manner. The protein is Elongation factor 4 1 of Rhodopirellula baltica (strain DSM 10527 / NCIMB 13988 / SH1).